Reading from the N-terminus, the 226-residue chain is Cytidylate kinase (226 aa).

10-18 contacts ATP; the sequence is GPAGAGKST.

Belongs to the cytidylate kinase family. Type 1 subfamily.

The protein localises to the cytoplasm. It carries out the reaction CMP + ATP = CDP + ADP. The enzyme catalyses dCMP + ATP = dCDP + ADP. The chain is Cytidylate kinase from Caldicellulosiruptor bescii (strain ATCC BAA-1888 / DSM 6725 / KCTC 15123 / Z-1320) (Anaerocellum thermophilum).